The primary structure comprises 201 residues: Recombination protein RecR (201 aa).

A C4-type zinc finger spans residues Cys-60 to Cys-75. The Toprim domain occupies Ser-83 to Pro-178.

Belongs to the RecR family.

May play a role in DNA repair. It seems to be involved in an RecBC-independent recombinational process of DNA repair. It may act with RecF and RecO. The chain is Recombination protein RecR from Rhodopseudomonas palustris (strain BisB18).